An 863-amino-acid chain; its full sequence is Glycogen phosphorylase (863 aa).

K618 bears the N6-(pyridoxal phosphate)lysine mark.

It belongs to the glycogen phosphorylase family. Requires pyridoxal 5'-phosphate as cofactor.

It carries out the reaction [(1-&gt;4)-alpha-D-glucosyl](n) + phosphate = [(1-&gt;4)-alpha-D-glucosyl](n-1) + alpha-D-glucose 1-phosphate. In terms of biological role, phosphorylase is an important allosteric enzyme in carbohydrate metabolism. Enzymes from different sources differ in their regulatory mechanisms and in their natural substrates. However, all known phosphorylases share catalytic and structural properties. The protein is Glycogen phosphorylase (glgP) of Mycobacterium bovis (strain ATCC BAA-935 / AF2122/97).